The primary structure comprises 571 residues: Proline--tRNA ligase (571 aa).

This sequence belongs to the class-II aminoacyl-tRNA synthetase family. ProS type 1 subfamily. In terms of assembly, homodimer.

It is found in the cytoplasm. It carries out the reaction tRNA(Pro) + L-proline + ATP = L-prolyl-tRNA(Pro) + AMP + diphosphate. Catalyzes the attachment of proline to tRNA(Pro) in a two-step reaction: proline is first activated by ATP to form Pro-AMP and then transferred to the acceptor end of tRNA(Pro). As ProRS can inadvertently accommodate and process non-cognate amino acids such as alanine and cysteine, to avoid such errors it has two additional distinct editing activities against alanine. One activity is designated as 'pretransfer' editing and involves the tRNA(Pro)-independent hydrolysis of activated Ala-AMP. The other activity is designated 'posttransfer' editing and involves deacylation of mischarged Ala-tRNA(Pro). The misacylated Cys-tRNA(Pro) is not edited by ProRS. The protein is Proline--tRNA ligase of Pseudomonas putida (strain GB-1).